The sequence spans 231 residues: Uracil-DNA glycosylase (231 aa).

Aspartate 71 functions as the Proton acceptor in the catalytic mechanism.

It belongs to the uracil-DNA glycosylase (UDG) superfamily. UNG family.

The protein localises to the cytoplasm. The catalysed reaction is Hydrolyzes single-stranded DNA or mismatched double-stranded DNA and polynucleotides, releasing free uracil.. Excises uracil residues from the DNA which can arise as a result of misincorporation of dUMP residues by DNA polymerase or due to deamination of cytosine. This chain is Uracil-DNA glycosylase, found in Pseudomonas aeruginosa (strain UCBPP-PA14).